The primary structure comprises 281 residues: Phosphate import ATP-binding protein PstB (281 aa).

One can recognise an ABC transporter domain in the interval 33–276 (FKIENLSLWY…PQLKRTRDYI (244 aa)). Position 67–74 (67–74 (GPSGCGKS)) interacts with ATP.

This sequence belongs to the ABC transporter superfamily. Phosphate importer (TC 3.A.1.7) family. In terms of assembly, the complex is composed of two ATP-binding proteins (PstB), two transmembrane proteins (PstC and PstA) and a solute-binding protein (PstS).

It localises to the cell membrane. It catalyses the reaction phosphate(out) + ATP + H2O = ADP + 2 phosphate(in) + H(+). Functionally, part of the ABC transporter complex PstSACB involved in phosphate import. Responsible for energy coupling to the transport system. The sequence is that of Phosphate import ATP-binding protein PstB from Mycoplasma mobile (strain ATCC 43663 / 163K / NCTC 11711) (Mesomycoplasma mobile).